Consider the following 402-residue polypeptide: CCA-adding enzyme (402 aa).

The ATP site is built by G32 and R35. Positions 32 and 35 each coordinate CTP. Mg(2+) is bound by residues D45 and D47. R116, D159, R162, R165, and R168 together coordinate ATP. Residues R116, D159, R162, R165, and R168 each contribute to the CTP site.

This sequence belongs to the tRNA nucleotidyltransferase/poly(A) polymerase family. Bacterial CCA-adding enzyme type 3 subfamily. As to quaternary structure, homodimer. Requires Mg(2+) as cofactor.

The enzyme catalyses a tRNA precursor + 2 CTP + ATP = a tRNA with a 3' CCA end + 3 diphosphate. The catalysed reaction is a tRNA with a 3' CCA end + 2 CTP + ATP = a tRNA with a 3' CCACCA end + 3 diphosphate. In terms of biological role, catalyzes the addition and repair of the essential 3'-terminal CCA sequence in tRNAs without using a nucleic acid template. Adds these three nucleotides in the order of C, C, and A to the tRNA nucleotide-73, using CTP and ATP as substrates and producing inorganic pyrophosphate. tRNA 3'-terminal CCA addition is required both for tRNA processing and repair. Also involved in tRNA surveillance by mediating tandem CCA addition to generate a CCACCA at the 3' terminus of unstable tRNAs. While stable tRNAs receive only 3'-terminal CCA, unstable tRNAs are marked with CCACCA and rapidly degraded. This chain is CCA-adding enzyme, found in Streptococcus pyogenes serotype M3 (strain ATCC BAA-595 / MGAS315).